The sequence spans 111 residues: Small ribosomal subunit protein uS17 (111 aa).

Belongs to the universal ribosomal protein uS17 family. In terms of assembly, part of the 30S ribosomal subunit.

In terms of biological role, one of the primary rRNA binding proteins, it binds specifically to the 5'-end of 16S ribosomal RNA. In Archaeoglobus fulgidus (strain ATCC 49558 / DSM 4304 / JCM 9628 / NBRC 100126 / VC-16), this protein is Small ribosomal subunit protein uS17.